We begin with the raw amino-acid sequence, 1372 residues long: DNA-directed RNA polymerase subunit beta (1372 aa).

The protein belongs to the RNA polymerase beta chain family. The RNAP catalytic core consists of 2 alpha, 1 beta, 1 beta' and 1 omega subunit. When a sigma factor is associated with the core the holoenzyme is formed, which can initiate transcription.

It catalyses the reaction RNA(n) + a ribonucleoside 5'-triphosphate = RNA(n+1) + diphosphate. DNA-dependent RNA polymerase catalyzes the transcription of DNA into RNA using the four ribonucleoside triphosphates as substrates. The chain is DNA-directed RNA polymerase subunit beta from Psychrobacter arcticus (strain DSM 17307 / VKM B-2377 / 273-4).